Reading from the N-terminus, the 465-residue chain is ATP synthase subunit beta (465 aa).

Residue 151–158 (GGAGVGKT) coordinates ATP.

It belongs to the ATPase alpha/beta chains family. As to quaternary structure, F-type ATPases have 2 components, CF(1) - the catalytic core - and CF(0) - the membrane proton channel. CF(1) has five subunits: alpha(3), beta(3), gamma(1), delta(1), epsilon(1). CF(0) has four main subunits: a(1), b(1), b'(1) and c(9-12).

The protein resides in the cell inner membrane. The catalysed reaction is ATP + H2O + 4 H(+)(in) = ADP + phosphate + 5 H(+)(out). Its function is as follows. Produces ATP from ADP in the presence of a proton gradient across the membrane. The catalytic sites are hosted primarily by the beta subunits. The polypeptide is ATP synthase subunit beta (Chloroherpeton thalassium (strain ATCC 35110 / GB-78)).